The primary structure comprises 437 residues: Protein farnesyltransferase subunit beta (437 aa).

PFTB repeat units follow at residues Ala-123 to Gly-164, Arg-174 to Asn-215, Phe-222 to Lys-263, Leu-270 to His-312, and Gln-332 to Gln-374. (2E,6E)-farnesyl diphosphate contacts are provided by residues His-248 to Tyr-251 and Arg-291 to Lys-294. Zn(2+) is bound by residues Asp-297 and Cys-299. (2E,6E)-farnesyl diphosphate is bound at residue Tyr-300–Trp-303. His-362 is a Zn(2+) binding site. Residue Ser-432 is modified to Phosphoserine. Thr-436 bears the Phosphothreonine mark.

Belongs to the protein prenyltransferase subunit beta family. In terms of assembly, heterodimer of FNTA and FNTB. Zn(2+) is required as a cofactor.

The catalysed reaction is L-cysteinyl-[protein] + (2E,6E)-farnesyl diphosphate = S-(2E,6E)-farnesyl-L-cysteinyl-[protein] + diphosphate. Its function is as follows. Essential subunit of the farnesyltransferase complex. Catalyzes the transfer of a farnesyl moiety from farnesyl diphosphate to a cysteine at the fourth position from the C-terminus of several proteins having the C-terminal sequence Cys-aliphatic-aliphatic-X. This is Protein farnesyltransferase subunit beta (Fntb) from Rattus norvegicus (Rat).